The sequence spans 375 residues: Protein HrmA (375 aa).

Functionally, unknown. May serve a regulatory function. The chain is Protein HrmA (hrmA) from Pseudomonas syringae pv. syringae.